Here is a 1036-residue protein sequence, read N- to C-terminus: Isoleucine--tRNA ligase (1036 aa).

The 'HIGH' region signature appears at 46 to 56 (PFATGLPHYGH). A 'KMSKS' region motif is present at residues 589-593 (KMSKR). Residue Lys-592 participates in ATP binding.

The protein belongs to the class-I aminoacyl-tRNA synthetase family. IleS type 2 subfamily. Monomer. Requires Zn(2+) as cofactor.

The protein resides in the cytoplasm. It catalyses the reaction tRNA(Ile) + L-isoleucine + ATP = L-isoleucyl-tRNA(Ile) + AMP + diphosphate. Functionally, catalyzes the attachment of isoleucine to tRNA(Ile). As IleRS can inadvertently accommodate and process structurally similar amino acids such as valine, to avoid such errors it has two additional distinct tRNA(Ile)-dependent editing activities. One activity is designated as 'pretransfer' editing and involves the hydrolysis of activated Val-AMP. The other activity is designated 'posttransfer' editing and involves deacylation of mischarged Val-tRNA(Ile). This is Isoleucine--tRNA ligase from Chlamydia trachomatis serovar L2b (strain UCH-1/proctitis).